Reading from the N-terminus, the 68-residue chain is Protein DsrB (68 aa).

Belongs to the DsrB family.

The chain is Protein DsrB from Sodalis glossinidius (strain morsitans).